Reading from the N-terminus, the 507-residue chain is MTENQNPAIDENKLIAERRGKLGKLREKGLAFPNDFRRDSYCADLQARYGDKSKEELEEASVRAKVSGRIMAMRGPFVVIQDMTGRIQLYIDRKGLPPEQLENVKLWDLGDIVAAEGALHKSDKGDLYVNMENPRLMVKALRPLPDKHKGLTNTEMRYRQRYLDLITNEEARETFRIRSKVIESIRYFLTKRDFIEAETPMLQVIPGGATARPFVTYHNALDIEMFLRIAPELYLKRLVVGGFERVFEINRNFRNEGLSTRHNPEFTMIEFYQAFADYKDLMNLTEEMLRWVAQEALGTTEVRNTSKNTDGDVVDEIIYDFGKPFIRMTVVESILHFNPELTLGDIDNMDGAKKVATGLGIPLKASWGLGKIQIEIFEKTVEHRLMQPTFITEYPTEVSPLARRNDDNPFVTDRFEFFVGGREIANGFSELNDPEDQAERFRKQVAEKEAGDDEAMFFDEDYITALEHGMPPTAGEGIGIDRLVMLLTDSPSIRDVILFPHMRPLAD.

The Mg(2+) site is built by E416 and E423.

This sequence belongs to the class-II aminoacyl-tRNA synthetase family. In terms of assembly, homodimer. The cofactor is Mg(2+).

It localises to the cytoplasm. It carries out the reaction tRNA(Lys) + L-lysine + ATP = L-lysyl-tRNA(Lys) + AMP + diphosphate. In Hahella chejuensis (strain KCTC 2396), this protein is Lysine--tRNA ligase.